A 270-amino-acid chain; its full sequence is Formamidopyrimidine-DNA glycosylase (270 aa).

Catalysis depends on P2, which acts as the Schiff-base intermediate with DNA. Catalysis depends on E3, which acts as the Proton donor. K58 (proton donor; for beta-elimination activity) is an active-site residue. DNA-binding residues include H90, R109, and R152. An FPG-type zinc finger spans residues 237-270 (RVYGREGEPCHCGTVIRRRVDGGRSTFYCPKCQK). Residue R260 is the Proton donor; for delta-elimination activity of the active site.

It belongs to the FPG family. As to quaternary structure, monomer. It depends on Zn(2+) as a cofactor.

It carries out the reaction Hydrolysis of DNA containing ring-opened 7-methylguanine residues, releasing 2,6-diamino-4-hydroxy-5-(N-methyl)formamidopyrimidine.. The catalysed reaction is 2'-deoxyribonucleotide-(2'-deoxyribose 5'-phosphate)-2'-deoxyribonucleotide-DNA = a 3'-end 2'-deoxyribonucleotide-(2,3-dehydro-2,3-deoxyribose 5'-phosphate)-DNA + a 5'-end 5'-phospho-2'-deoxyribonucleoside-DNA + H(+). Involved in base excision repair of DNA damaged by oxidation or by mutagenic agents. Acts as a DNA glycosylase that recognizes and removes damaged bases. Has a preference for oxidized purines, such as 7,8-dihydro-8-oxoguanine (8-oxoG). Has AP (apurinic/apyrimidinic) lyase activity and introduces nicks in the DNA strand. Cleaves the DNA backbone by beta-delta elimination to generate a single-strand break at the site of the removed base with both 3'- and 5'-phosphates. The sequence is that of Formamidopyrimidine-DNA glycosylase from Rhizorhabdus wittichii (strain DSM 6014 / CCUG 31198 / JCM 15750 / NBRC 105917 / EY 4224 / RW1) (Sphingomonas wittichii).